A 218-amino-acid chain; its full sequence is Peptidyl-tRNA hydrolase (218 aa).

A tRNA-binding site is contributed by Tyr19. His24 (proton acceptor) is an active-site residue. Positions 68, 70, and 116 each coordinate tRNA. Residues 181–218 are disordered; that stretch reads WNTATQRLNARPAPPKPPKAPKAPQPAAADQPKDESQP. The span at 192 to 204 shows a compositional bias: pro residues; sequence PAPPKPPKAPKAP.

Belongs to the PTH family. As to quaternary structure, monomer.

It localises to the cytoplasm. The catalysed reaction is an N-acyl-L-alpha-aminoacyl-tRNA + H2O = an N-acyl-L-amino acid + a tRNA + H(+). In terms of biological role, hydrolyzes ribosome-free peptidyl-tRNAs (with 1 or more amino acids incorporated), which drop off the ribosome during protein synthesis, or as a result of ribosome stalling. Functionally, catalyzes the release of premature peptidyl moieties from peptidyl-tRNA molecules trapped in stalled 50S ribosomal subunits, and thus maintains levels of free tRNAs and 50S ribosomes. The protein is Peptidyl-tRNA hydrolase of Azoarcus sp. (strain BH72).